We begin with the raw amino-acid sequence, 444 residues long: Tubulin beta-4A chain (444 aa).

An MREI motif motif is present at residues 1 to 4; that stretch reads MREI. Residues Gln-11, Glu-69, Ser-138, Gly-142, Thr-143, and Gly-144 each contribute to the GTP site. A Mg(2+)-binding site is contributed by Glu-69. Ser-172 carries the post-translational modification Phosphoserine; by CDK1. GTP contacts are provided by Asn-204 and Asn-226. At Glu-436 the chain carries 5-glutamyl polyglutamate.

Belongs to the tubulin family. Dimer of alpha and beta chains. A typical microtubule is a hollow water-filled tube with an outer diameter of 25 nm and an inner diameter of 15 nM. Alpha-beta heterodimers associate head-to-tail to form protofilaments running lengthwise along the microtubule wall with the beta-tubulin subunit facing the microtubule plus end conferring a structural polarity. Microtubules usually have 13 protofilaments but different protofilament numbers can be found in some organisms and specialized cells. The cofactor is Mg(2+). In terms of processing, some glutamate residues at the C-terminus are polyglycylated, resulting in polyglycine chains on the gamma-carboxyl group. Glycylation is mainly limited to tubulin incorporated into axonemes (cilia and flagella) whereas glutamylation is prevalent in neuronal cells, centrioles, axonemes, and the mitotic spindle. Both modifications can coexist on the same protein on adjacent residues, and lowering polyglycylation levels increases polyglutamylation, and reciprocally. Cilia and flagella glycylation is required for their stability and maintenance. Flagella glycylation controls sperm motility. Post-translationally, some glutamate residues at the C-terminus are polyglutamylated, resulting in polyglutamate chains on the gamma-carboxyl group. Polyglutamylation plays a key role in microtubule severing by spastin (SPAST). SPAST preferentially recognizes and acts on microtubules decorated with short polyglutamate tails: severing activity by SPAST increases as the number of glutamates per tubulin rises from one to eight, but decreases beyond this glutamylation threshold. Glutamylation is also involved in cilia motility. Phosphorylated on Ser-172 by CDK1 during the cell cycle, from metaphase to telophase, but not in interphase. This phosphorylation inhibits tubulin incorporation into microtubules.

The protein resides in the cytoplasm. Its subcellular location is the cytoskeleton. In terms of biological role, tubulin is the major constituent of microtubules, a cylinder consisting of laterally associated linear protofilaments composed of alpha- and beta-tubulin heterodimers. Microtubules grow by the addition of GTP-tubulin dimers to the microtubule end, where a stabilizing cap forms. Below the cap, tubulin dimers are in GDP-bound state, owing to GTPase activity of alpha-tubulin. The polypeptide is Tubulin beta-4A chain (TUBB4A) (Bos taurus (Bovine)).